The following is a 434-amino-acid chain: Enolase (434 aa).

A (2R)-2-phosphoglycerate-binding site is contributed by glutamine 167. The Proton donor role is filled by glutamate 209. Mg(2+) contacts are provided by aspartate 246, glutamate 291, and aspartate 318. (2R)-2-phosphoglycerate is bound by residues lysine 343, arginine 372, serine 373, and lysine 394. The active-site Proton acceptor is lysine 343.

The protein belongs to the enolase family. As to quaternary structure, component of the RNA degradosome, a multiprotein complex involved in RNA processing and mRNA degradation. It depends on Mg(2+) as a cofactor.

Its subcellular location is the cytoplasm. It is found in the secreted. The protein resides in the cell surface. It catalyses the reaction (2R)-2-phosphoglycerate = phosphoenolpyruvate + H2O. It functions in the pathway carbohydrate degradation; glycolysis; pyruvate from D-glyceraldehyde 3-phosphate: step 4/5. Its function is as follows. Catalyzes the reversible conversion of 2-phosphoglycerate (2-PG) into phosphoenolpyruvate (PEP). It is essential for the degradation of carbohydrates via glycolysis. The sequence is that of Enolase from Buchnera aphidicola subsp. Acyrthosiphon pisum (strain 5A).